Consider the following 2145-residue polypeptide: Glutamate synthase [NADH] (2145 aa).

A propeptide spanning residues 1 to 53 (MPVLKSDNFDPLEEAYEGGTIQNYNDEHHLHKSWANVIPDKRGLYDPDYEHDA) is cleaved from the precursor. Residue cysteine 54 is the For GATase activity of the active site. The Glutamine amidotransferase type-2 domain maps to 54 to 455 (CGVGFVANKH…PGDLFLVDTQ (402 aa)). 1132 to 1189 (LAETHQTLVLNDLRRNVVVQTDGQLRTGFDIAVAVLLGAESFTLATVPLIAMGCVMLR) is an FMN binding site. The [3Fe-4S] cluster site is built by cysteine 1185, cysteine 1191, and cysteine 1196. Residues 1551 to 1600 (KKVLLKEKAEAAKAKAKATSEYLKKFRSNQEVDDEVNTLLIANQKAKEQE) are a coiled coil. 1928–1942 (GGGDTGNDCLGTSVR) lines the NAD(+) pocket. A Phosphothreonine modification is found at threonine 2070.

The protein belongs to the glutamate synthase family. Homotrimer. The cofactor is [3Fe-4S] cluster. FAD serves as cofactor. It depends on FMN as a cofactor.

The catalysed reaction is 2 L-glutamate + NAD(+) = L-glutamine + 2-oxoglutarate + NADH + H(+). It functions in the pathway amino-acid biosynthesis; L-glutamate biosynthesis via GLT pathway; L-glutamate from 2-oxoglutarate and L-glutamine (NAD(+) route): step 1/1. The protein operates within energy metabolism; nitrogen metabolism. With respect to regulation, inhibited by homocysteine sulfonamide. Its function is as follows. Forms L-glutamate from L-glutamine and 2-oxoglutarate. Represents an alternative pathway to L-glutamate dehydrogenase for the biosynthesis of L-glutamate. Participates with glutamine synthetase in ammonia assimilation processes. The enzyme is specific for NADH, L-glutamine and 2-oxoglutarate. The sequence is that of Glutamate synthase [NADH] (GLT1) from Saccharomyces cerevisiae (strain ATCC 204508 / S288c) (Baker's yeast).